The chain runs to 297 residues: Ribosomal protein L11 methyltransferase (297 aa).

T139, G164, D186, and N233 together coordinate S-adenosyl-L-methionine.

It belongs to the methyltransferase superfamily. PrmA family.

It localises to the cytoplasm. It catalyses the reaction L-lysyl-[protein] + 3 S-adenosyl-L-methionine = N(6),N(6),N(6)-trimethyl-L-lysyl-[protein] + 3 S-adenosyl-L-homocysteine + 3 H(+). Functionally, methylates ribosomal protein L11. The polypeptide is Ribosomal protein L11 methyltransferase (Trichodesmium erythraeum (strain IMS101)).